Reading from the N-terminus, the 345-residue chain is Dihydroorotase (345 aa).

His-13 and His-15 together coordinate Zn(2+). Residues His-15–Arg-17 and Asn-41 each bind substrate. Lys-100, His-137, and His-175 together coordinate Zn(2+). The residue at position 100 (Lys-100) is an N6-carboxylysine. A substrate-binding site is contributed by His-137. Leu-220 serves as a coordination point for substrate. A Zn(2+)-binding site is contributed by Asp-248. Asp-248 is a catalytic residue. Residues His-252 and Ala-264 each coordinate substrate.

It belongs to the metallo-dependent hydrolases superfamily. DHOase family. Class II DHOase subfamily. In terms of assembly, homodimer. Zn(2+) serves as cofactor.

It catalyses the reaction (S)-dihydroorotate + H2O = N-carbamoyl-L-aspartate + H(+). It participates in pyrimidine metabolism; UMP biosynthesis via de novo pathway; (S)-dihydroorotate from bicarbonate: step 3/3. In terms of biological role, catalyzes the reversible cyclization of carbamoyl aspartate to dihydroorotate. The protein is Dihydroorotase of Laribacter hongkongensis (strain HLHK9).